Here is a 251-residue protein sequence, read N- to C-terminus: Intermembrane phospholipid transport system lipoprotein MlaA (251 aa).

Positions 1–17 are cleaved as a signal peptide; that stretch reads MKLRLSALALGTTLLVG. Cys-18 carries the N-palmitoyl cysteine lipid modification. Cys-18 is lipidated: S-diacylglycerol cysteine. The interval 228 to 251 is disordered; the sequence is GELKPQENPNAQAIQDDLKDIDSE.

This sequence belongs to the MlaA family.

It localises to the cell outer membrane. Functionally, involved in a phospholipid transport pathway that maintains lipid asymmetry in the outer membrane by retrograde trafficking of phospholipids from the outer membrane to the inner membrane. Required for intercellular spreading of S.flexneri. The sequence is that of Intermembrane phospholipid transport system lipoprotein MlaA from Shigella flexneri.